Consider the following 199-residue polypeptide: MSACPAPRSPVRWLHAFTLFLLLAVLAGCVSVPKPMAGAGEDVFSRVGRFAITVTESDGKQQAVQGGFAWRDDGGSYLLDLTNPLGSTEARVEGRPGMAVLTRANGERLAAEHPDALAEDALGSPVPVTGLRDWLRGRLMAGAAPDGLERDAQGRPTAFEQDGWNARLSRYDAQGPQLLVLQRQEPGRRILVRLVITQP.

The signal sequence occupies residues 1–28 (MSACPAPRSPVRWLHAFTLFLLLAVLAG). The N-palmitoyl cysteine moiety is linked to residue cysteine 29. A lipid anchor (S-diacylglycerol cysteine) is attached at cysteine 29.

This sequence belongs to the LolB family. In terms of assembly, monomer.

It localises to the cell outer membrane. Plays a critical role in the incorporation of lipoproteins in the outer membrane after they are released by the LolA protein. The sequence is that of Outer-membrane lipoprotein LolB from Bordetella pertussis (strain Tohama I / ATCC BAA-589 / NCTC 13251).